The primary structure comprises 282 residues: Nicotianamine synthase-like 5 protein (282 aa).

This sequence belongs to the nicotianamine synthase (NAS)-like family.

This Hordeum vulgare (Barley) protein is Nicotianamine synthase-like 5 protein (NAS5).